The sequence spans 510 residues: ATP synthase subunit alpha (510 aa).

169 to 176 lines the ATP pocket; the sequence is GDRQTGKT.

This sequence belongs to the ATPase alpha/beta chains family. In terms of assembly, F-type ATPases have 2 components, CF(1) - the catalytic core - and CF(0) - the membrane proton channel. CF(1) has five subunits: alpha(3), beta(3), gamma(1), delta(1), epsilon(1). CF(0) has four main subunits: a(1), b(1), b'(1) and c(9-12).

Its subcellular location is the cell inner membrane. The enzyme catalyses ATP + H2O + 4 H(+)(in) = ADP + phosphate + 5 H(+)(out). In terms of biological role, produces ATP from ADP in the presence of a proton gradient across the membrane. The alpha chain is a regulatory subunit. The polypeptide is ATP synthase subunit alpha (Rhodopseudomonas palustris (strain ATCC BAA-98 / CGA009)).